Here is a 671-residue protein sequence, read N- to C-terminus: Chitin biosynthesis protein CHS5 (671 aa).

A Fibronectin type-III domain is found at 78 to 168; it reads KPESPVLKIV…EKVILRTHKM (91 aa). Positions 166–262 constitute a BRCT domain; it reads HKMTDMSGIT…RIVGVRGFYL (97 aa). Positions 280 to 671 are disordered; the sequence is EELSYSKENE…KKNKKKGKKK (392 aa). T305 is subject to Phosphothreonine. Over residues 311–321 the composition is skewed to polar residues; that stretch reads ASPNDNESNPS. Residues 322-332 show a composition bias toward basic and acidic residues; it reads EAKEQGEKSGH. Phosphoserine is present on residues S338, S362, S365, S383, and S384. Over residues 349–365 the composition is skewed to polar residues; that stretch reads ALENETTIETVNPSVRS. Over residues 409–419 the composition is skewed to basic and acidic residues; the sequence is KSEDTDTHSNE. Over residues 434-443 the composition is skewed to polar residues; sequence NNITTESAGE. A compositionally biased stretch (acidic residues) spans 461–486; the sequence is EIETPEVNESIEDANEPAEDSNEPVE. A compositionally biased stretch (basic and acidic residues) spans 487–521; it reads DSNKPVKDSNKPVEDSNKPVEDSNKPVEDSNKPVE. The segment covering 522–538 has biased composition (acidic residues); it reads DANEPVEDTSEPVEDAG. The segment covering 542–551 has biased composition (polar residues); sequence QETNEFTTDI. Phosphoserine is present on residues S573 and S579. Over residues 581 to 591 the composition is skewed to basic and acidic residues; it reads EDVKPEEKGSE. K584 participates in a covalent cross-link: Glycyl lysine isopeptide (Lys-Gly) (interchain with G-Cter in ubiquitin). Position 590 is a phosphoserine (S590). Residues 606-620 are compositionally biased toward polar residues; that stretch reads GESTTHQKTEASASL. Over residues 627–638 the composition is skewed to acidic residues; that stretch reads EEQETTEAEVNT. Positions 657-671 are enriched in basic residues; the sequence is NKKKNKKNKKKGKKK.

This sequence belongs to the CHS5 family. In terms of assembly, component of the CHS5/6 complex composed of the 4 CHAPS proteins BCH1, BCH2, BUD7, and CHS6 as well as at least CHS5 and GTP-bound ARF1. The complex interacts with the cargo protein CHS3.

The protein resides in the golgi apparatus. It localises to the trans-Golgi network membrane. Component of the CHS5/6 complex which mediates export of specific cargo proteins, including chitin synthase CHS3. Also involved in targeting FUS1 to sites of polarized growth. This is Chitin biosynthesis protein CHS5 (CHS5) from Saccharomyces cerevisiae (strain ATCC 204508 / S288c) (Baker's yeast).